The following is a 73-amino-acid chain: Cell division protein ZapB (73 aa).

Residues 3–66 (LELLSKLETK…SWNEKVTGLV (64 aa)) are a coiled coil.

This sequence belongs to the ZapB family. Homodimer. The ends of the coiled-coil dimer bind to each other, forming polymers. Interacts with FtsZ.

It localises to the cytoplasm. Non-essential, abundant cell division factor that is required for proper Z-ring formation. It is recruited early to the divisome by direct interaction with FtsZ, stimulating Z-ring assembly and thereby promoting cell division earlier in the cell cycle. Its recruitment to the Z-ring requires functional FtsA or ZipA. The polypeptide is Cell division protein ZapB (Shewanella baltica (strain OS223)).